The primary structure comprises 1450 residues: DNA-directed RNA polymerase RPB1 homolog (1450 aa).

The protein belongs to the RNA polymerase beta' chain family. In terms of assembly, part of the viral DNA-directed RNA polymerase that consists of 8 polII-like subunits (RPB1, RPB2, RPB3, RPB5, RPB6, RPB7, RPB9, RPB10), a capping enzyme and a termination factor.

The protein localises to the virion. The catalysed reaction is RNA(n) + a ribonucleoside 5'-triphosphate = RNA(n+1) + diphosphate. Its function is as follows. Catalytic component of the DNA-directed RNA polymerase (RNAP) that catalyzes the transcription in the cytoplasm of viral DNA into RNA using the four ribonucleoside triphosphates as substrates. Forms the polymerase active center together with RPB2. Part of the core element with the central large cleft, the clamp element that moves to open and close the cleft and the jaws that are thought to grab the incoming DNA template. In African swine fever virus (isolate Warthog/Namibia/Wart80/1980) (ASFV), this protein is DNA-directed RNA polymerase RPB1 homolog.